Reading from the N-terminus, the 851-residue chain is Venom phosphodiesterase 1 (851 aa).

The N-terminal stretch at 1 to 23 (MIQQKVLFISLVAVTLGLGLGLG) is a signal peptide. 2 consecutive SMB domains span residues 30 to 73 (PQVS…VLPT) and 74 to 118 (QSWS…GETS). 16 cysteine pairs are disulfide-bonded: cysteine 34–cysteine 38, cysteine 34–cysteine 51, cysteine 38–cysteine 69, cysteine 49–cysteine 51, cysteine 49–cysteine 62, cysteine 55–cysteine 61, cysteine 62–cysteine 69, cysteine 78–cysteine 83, cysteine 78–cysteine 95, cysteine 83–cysteine 113, cysteine 93–cysteine 95, cysteine 93–cysteine 106, cysteine 99–cysteine 105, cysteine 106–cysteine 113, cysteine 124–cysteine 170, and cysteine 132–cysteine 344. N-linked (GlcNAc...) asparagine glycosylation is present at asparagine 39. Positions 58-60 (RQA) match the Cell attachment site motif. A divalent metal cation-binding residues include aspartate 147 and threonine 185. The active-site AMP-threonine intermediate is threonine 185. N-linked (GlcNAc...) asparagine glycosylation is found at asparagine 216, asparagine 259, and asparagine 270. Lysine 271 is a binding site for AMP. Residues aspartate 305, histidine 309, aspartate 352, and histidine 353 each coordinate a divalent metal cation. Histidine 309 contacts AMP. Intrachain disulfides connect cysteine 360-cysteine 457, cysteine 408-cysteine 793, cysteine 541-cysteine 599, cysteine 554-cysteine 654, cysteine 556-cysteine 639, and cysteine 762-cysteine 772. Asparagine 405 is a glycosylation site (N-linked (GlcNAc...) asparagine). Residue histidine 462 participates in a divalent metal cation binding. Asparagine 512, asparagine 594, asparagine 674, and asparagine 745 each carry an N-linked (GlcNAc...) asparagine glycan.

This sequence belongs to the nucleotide pyrophosphatase/phosphodiesterase family. Monomer cleaved in two subunits; disulfide-linked. Is synthesized as a single-chain protein and is subsequently cleaved to form a two-subunit protein held together with disulfide bonds. A divalent metal cation is required as a cofactor. Expressed by venom gland.

The protein resides in the secreted. The enzyme catalyses ADP + H2O = AMP + phosphate + H(+). In terms of biological role, hydrolyzes ADP with high activity. Shows weak or no activity on 5'-AMP, 5'-GMP, 3'-AMP, ATP, cAMP, and cGMP. Is devoid of monophosphatase and proteinase activities. Dose-dependently inhibits platelet aggregation induced by ADP and collagen. The protein is Venom phosphodiesterase 1 of Crotalus adamanteus (Eastern diamondback rattlesnake).